We begin with the raw amino-acid sequence, 132 residues long: Small ribosomal subunit protein uS9 (132 aa).

The tract at residues 100–132 (LKSNGLLTRDDRTKERKKPGLKRARKAPQYTKR) is disordered. Over residues 114 to 132 (ERKKPGLKRARKAPQYTKR) the composition is skewed to basic residues.

The protein belongs to the universal ribosomal protein uS9 family.

This Dehalococcoides mccartyi (strain ATCC BAA-2100 / JCM 16839 / KCTC 5957 / BAV1) protein is Small ribosomal subunit protein uS9.